We begin with the raw amino-acid sequence, 244 residues long: MSLVLLPAVDVVNGEAVRLVQGEAGSETGYGSPRDAALAWQNDGAEWVHIVDLDAAFGRGSNRELLADVVGELDVQVELSGGIRDDASLEAALATGCGRVNLGTAAIENPEWCARAIAKYGEKIAVGLDVRLVDGEYQLRGRGWVTEGGNLWETLARLDKDGCSRYVVTDVSKDGTLTGPNLELLAQVCAATDAPVVASGGVSTIDDLRAIAGLVDQGVEGSIVGKALYAGRFTLPEALAAVSG.

D10 serves as the catalytic Proton acceptor. Catalysis depends on D129, which acts as the Proton donor.

It belongs to the HisA/HisF family.

It is found in the cytoplasm. The enzyme catalyses 1-(5-phospho-beta-D-ribosyl)-5-[(5-phospho-beta-D-ribosylamino)methylideneamino]imidazole-4-carboxamide = 5-[(5-phospho-1-deoxy-D-ribulos-1-ylimino)methylamino]-1-(5-phospho-beta-D-ribosyl)imidazole-4-carboxamide. The protein operates within amino-acid biosynthesis; L-histidine biosynthesis; L-histidine from 5-phospho-alpha-D-ribose 1-diphosphate: step 4/9. In Rhodococcus jostii (strain RHA1), this protein is 1-(5-phosphoribosyl)-5-[(5-phosphoribosylamino)methylideneamino] imidazole-4-carboxamide isomerase.